The following is a 356-amino-acid chain: tRNA N6-adenosine threonylcarbamoyltransferase (356 aa).

2 residues coordinate Fe cation: histidine 110 and histidine 114. Residues 132–136, aspartate 165, glycine 178, aspartate 182, and asparagine 288 each bind substrate; that span reads LVSGG. Aspartate 316 contributes to the Fe cation binding site.

It belongs to the KAE1 / TsaD family. The cofactor is Fe(2+).

It localises to the cytoplasm. It catalyses the reaction L-threonylcarbamoyladenylate + adenosine(37) in tRNA = N(6)-L-threonylcarbamoyladenosine(37) in tRNA + AMP + H(+). Required for the formation of a threonylcarbamoyl group on adenosine at position 37 (t(6)A37) in tRNAs that read codons beginning with adenine. Is involved in the transfer of the threonylcarbamoyl moiety of threonylcarbamoyl-AMP (TC-AMP) to the N6 group of A37, together with TsaE and TsaB. TsaD likely plays a direct catalytic role in this reaction. The sequence is that of tRNA N6-adenosine threonylcarbamoyltransferase from Maridesulfovibrio salexigens (strain ATCC 14822 / DSM 2638 / NCIMB 8403 / VKM B-1763) (Desulfovibrio salexigens).